We begin with the raw amino-acid sequence, 418 residues long: Gamma-glutamyl phosphate reductase (418 aa).

Belongs to the gamma-glutamyl phosphate reductase family.

Its subcellular location is the cytoplasm. The catalysed reaction is L-glutamate 5-semialdehyde + phosphate + NADP(+) = L-glutamyl 5-phosphate + NADPH + H(+). The protein operates within amino-acid biosynthesis; L-proline biosynthesis; L-glutamate 5-semialdehyde from L-glutamate: step 2/2. Functionally, catalyzes the NADPH-dependent reduction of L-glutamate 5-phosphate into L-glutamate 5-semialdehyde and phosphate. The product spontaneously undergoes cyclization to form 1-pyrroline-5-carboxylate. This is Gamma-glutamyl phosphate reductase from Histophilus somni (strain 129Pt) (Haemophilus somnus).